The sequence spans 156 residues: 6,7-dimethyl-8-ribityllumazine synthase (156 aa).

5-amino-6-(D-ribitylamino)uracil is bound by residues tryptophan 28, 60 to 62 (SFE), and 82 to 84 (VVV). 87 to 88 (GT) provides a ligand contact to (2S)-2-hydroxy-3-oxobutyl phosphate. Histidine 90 serves as the catalytic Proton donor. Phenylalanine 115 lines the 5-amino-6-(D-ribitylamino)uracil pocket. Arginine 129 contacts (2S)-2-hydroxy-3-oxobutyl phosphate.

Belongs to the DMRL synthase family.

The enzyme catalyses (2S)-2-hydroxy-3-oxobutyl phosphate + 5-amino-6-(D-ribitylamino)uracil = 6,7-dimethyl-8-(1-D-ribityl)lumazine + phosphate + 2 H2O + H(+). Its pathway is cofactor biosynthesis; riboflavin biosynthesis; riboflavin from 2-hydroxy-3-oxobutyl phosphate and 5-amino-6-(D-ribitylamino)uracil: step 1/2. Catalyzes the formation of 6,7-dimethyl-8-ribityllumazine by condensation of 5-amino-6-(D-ribitylamino)uracil with 3,4-dihydroxy-2-butanone 4-phosphate. This is the penultimate step in the biosynthesis of riboflavin. This is 6,7-dimethyl-8-ribityllumazine synthase from Kocuria rhizophila (strain ATCC 9341 / DSM 348 / NBRC 103217 / DC2201).